We begin with the raw amino-acid sequence, 1852 residues long: Voltage-dependent L-type calcium channel subunit alpha-1S (1852 aa).

Residues 1 to 23 (MEPPSPQDEGLRKKQPKKPVPEI) are disordered. Over 1 to 51 (MEPPSPQDEGLRKKQPKKPVPEILPRPPRALFCLTLQNPLRKACISIVEWK) the chain is Cytoplasmic. One copy of the I repeat lies at 38–337 (NPLRKACISI…LVLGVLSGEF (300 aa)). The chain crosses the membrane as a helical span at residues 52-70 (PFETIILLTIFANCVALAV). Residues 71-85 (YLPMPEDDNNTLNLG) lie on the Extracellular side of the membrane. An N-linked (GlcNAc...) asparagine glycan is attached at Asn-79. The helical transmembrane segment at 86–106 (LEKLEYFFLIVFSIEAAMKII) threads the bilayer. At 107-115 (AYGFLFHQD) the chain is on the cytoplasmic side. Residues 116-136 (AYLRSGWNVLDFIIVFLGVFT) traverse the membrane as a helical segment. Over 137 to 160 (VILEQVNIIQTNTAPMSSKGAGLD) the chain is Extracellular. Residues 161-179 (VKALRAFRVLRPLRLVSGV) traverse the membrane as a helical segment. Over 180-196 (PSLQVVLNSIFKAMLPL) the chain is Cytoplasmic. A helical membrane pass occupies residues 197 to 218 (FHIALLVLFMVIIYAIIGLELF). Residues 219–279 (KGKMHKTCYF…HGITHFDNFG (61 aa)) lie on the Extracellular side of the membrane. 2 disulfides stabilise this stretch: Cys-226–Cys-254 and Cys-245–Cys-261. Residue Asn-257 is glycosylated (N-linked (GlcNAc...) asparagine). Residues 280-301 (FSMLTVYQCISMEGWTDVLYWV) constitute an intramembrane region (pore-forming). The short motif at 290-293 (SMEG) is the Selectivity filter of repeat I element. Position 292 (Glu-292) interacts with Ca(2+). The Extracellular segment spans residues 302–309 (NDAIGNEW). The helical transmembrane segment at 310-330 (PWIYFVTLILLGSFFILNLVL) threads the bilayer. The Cytoplasmic segment spans residues 331–432 (GVLSGEFTKE…WKCHDLVKSK (102 aa)). Residues 357-374 (QQLEEDLRGYMSWITQGE) are binding to the beta subunit. 2 positions are modified to phosphoserine: Ser-393 and Ser-397. The stretch at 418-664 (NRVFRWKCHD…VFLAIAVDNL (247 aa)) is one II repeat. Residues 433-451 (VFYWLVILIVALNTLSIAS) form a helical membrane-spanning segment. The Extracellular portion of the chain corresponds to 452–462 (EHHNQPLWLTH). Residues 463–483 (LQDVANRVLLTLFTIEMLMKM) form a helical membrane-spanning segment. The Cytoplasmic segment spans residues 484–494 (YGLGLRQYFMS). A helical membrane pass occupies residues 495–514 (IFNRFDCFVVCSGILEILLV). The Extracellular portion of the chain corresponds to 515 to 523 (ESGAMSPLG). The chain crosses the membrane as a helical span at residues 524-542 (ISVLRCIRLLRLFKITKYW). Over 543 to 561 (TSLSNLVASLLNSIRSIAS) the chain is Cytoplasmic. The chain crosses the membrane as a helical span at residues 562-581 (LLLLLFLFIIIFALLGMQLF). Over 582–601 (GGRYDFEDTEVRRSNFDNFP) the chain is Extracellular. The segment at residues 602–623 (QALISVFQVLTGEDWNSVMYNG) is an intramembrane region (pore-forming). Positions 612–615 (TGED) match the Selectivity filter of repeat II motif. Residue Glu-614 coordinates Ca(2+). Topologically, residues 624-633 (IMAYGGPTYP) are extracellular. A helical transmembrane segment spans residues 634–653 (GVLVCIYFIILFVCGNYILL). Residues 654–799 (NVFLAIAVDN…VLCHRIVNAT (146 aa)) lie on the Cytoplasmic side of the membrane. 2 disordered regions span residues 675–712 (KAKAEERKRRKMSKGLPDKSEEERATVTKKLEQKSKGE) and 731–757 (EVKDPYPSADFPGDDEEDEPEIPVSPR). Ser-687 carries the phosphoserine; by PKA modification. Residues 690-711 (LPDKSEEERATVTKKLEQKSKG) show a composition bias toward basic and acidic residues. Positions 742–751 (PGDDEEDEPE) are enriched in acidic residues. Residues 768–1068 (EKAVPIPEAS…IFVGFVIVTF (301 aa)) form an III repeat. A helical transmembrane segment spans residues 800–818 (WFTNFILLFILLSSAALAA). Residues 819 to 830 (EDPIRADSMRNQ) are Extracellular-facing. A helical transmembrane segment spans residues 831 to 850 (ILEYFDYVFTAVFTVEIVLK). Residues 851 to 866 (MTTYGAFLHKGSFCRN) lie on the Cytoplasmic side of the membrane. The chain crosses the membrane as a helical span at residues 867 to 885 (YFNILDLLVVAVSLISMGL). Topologically, residues 886–892 (ESSAISV) are extracellular. The chain crosses the membrane as a helical span at residues 893 to 911 (VKILRVLRVLRPLRAINRA). The Cytoplasmic segment spans residues 912–930 (KGLKHVVQCVFVAIRTIGN). The helical transmembrane segment at 931 to 950 (IVLVTTLLQFMFACIGVQLF) threads the bilayer. At 951–1000 (KGKFYSCNDLSKMTEEECRGYYYIYKDGDPTQIELRPRQWIHNDFHFDNV) the chain is on the extracellular side. Cysteines 957 and 968 form a disulfide. The segment at 988–1077 (RQWIHNDFHF…FQEQGETEYK (90 aa)) is dihydropyridine binding. Residues 1001–1021 (LSAMMSLFTVSTFEGWPQLLY) constitute an intramembrane region (pore-forming). Residues 1012 to 1015 (TFEG) carry the Selectivity filter of repeat III motif. Glu-1014 is a binding site for Ca(2+). At 1022–1038 (KAIDSNEEDTGPVYNNR) the chain is on the extracellular side. Residues 1039 to 1060 (VEMAIFFIIYIILIAFFMMNIF) traverse the membrane as a helical segment. Topologically, residues 1061 to 1118 (VGFVIVTFQEQGETEYKNCELDKNQRQCVQYALKARPLRCYIPKNPYQYQVWYVVTSS) are cytoplasmic. The IV repeat unit spans residues 1105–1384 (NPYQYQVWYV…LFVAVIMDNF (280 aa)). The chain crosses the membrane as a helical span at residues 1119–1140 (YFEYLMFALIMLNTICLGMQHY). N-linked (GlcNAc...) asparagine glycosylation is present at Asn-1141. At 1141–1148 (NQSEQMNH) the chain is on the extracellular side. Residues 1149 to 1170 (ISDILNVAFTIIFTLEMVLKLI) form a helical membrane-spanning segment. Residues 1171 to 1180 (AFKPRGYFGD) lie on the Cytoplasmic side of the membrane. A helical membrane pass occupies residues 1181-1200 (PWNVFDFLIVIGSIIDVILS). At 1201–1231 (EIDTFLASSGGLYCLGGGCGNVDPDESARIS) the chain is on the extracellular side. Residues 1232-1250 (SAFFRLFRVMRLVKLLNRA) form a helical membrane-spanning segment. Topologically, residues 1251-1268 (EGVRTLLWTFIKSFQALP) are cytoplasmic. The chain crosses the membrane as a helical span at residues 1269 to 1289 (YVALLIVMLFFIYAVIGMQMF). Over 1290-1311 (GKIAMVDGTQINRNNNFQTFPQ) the chain is Extracellular. The segment at residues 1312 to 1330 (AVLLLFRCATGEAWQEILL) is an intramembrane region (pore-forming). Positions 1321 to 1324 (TGEA) match the Selectivity filter of repeat IV motif. Residues 1331–1356 (ACSYGKLCDPESDYAPGEEHTCGTNF) are Extracellular-facing. A dihydropyridine binding region spans residues 1337 to 1403 (LCDPESDYAP…LGPHHLDEFK (67 aa)). Cysteines 1338 and 1352 form a disulfide. Phenylalkylamine binding regions lie at residues 1349-1391 (EHTC…TRDW) and 1349-1392 (EHTC…RDWS). A helical transmembrane segment spans residues 1357–1381 (AYYYFISFYMLCAFLIINLFVAVIM). Topologically, residues 1382–1852 (DNFDYLTRDW…PEGGAVPWEP (471 aa)) are cytoplasmic. Positions 1522–1542 (KFYATFLIQEHFRKFMKRQEE) are interaction with calmodulin. Position 1575 is a phosphoserine; by PKA and CAMK2 (Ser-1575). Thr-1579 carries the post-translational modification Phosphothreonine. Ser-1617 carries the post-translational modification Phosphoserine; by PKA. Disordered stretches follow at residues 1702–1721 (GPLSQPCRASGPHSRSHVDK) and 1727–1762 (TQRGMPEGQVPPSPCQVTGAKAEHPVQKEGKGPTSR). Positions 1747 to 1757 (KAEHPVQKEGK) are enriched in basic and acidic residues.

The protein belongs to the calcium channel alpha-1 subunit (TC 1.A.1.11) family. CACNA1S subfamily. Component of a calcium channel complex consisting of a pore-forming alpha subunit (CACNA1S) and the ancillary subunits CACNB1 or CACNB2, CACNG1 and CACNA2D1. The channel complex contains alpha, beta, gamma and delta subunits in a 1:1:1:1 ratio, i.e. it contains either CACNB1 or CACNB2. CACNA1S channel activity is modulated by the auxiliary subunits (CACNB1 or CACNB2, CACNG1 and CACNA2D1). Interacts with DYSF and JSRP1. Interacts with RYR1. Interacts with STAC, STAC2 and STAC3 (via their SH3 domains). Interacts with CALM. The alpha-1S subunit is found in two isoforms in the skeletal muscle: a minor form of 212 kDa containing the complete amino acid sequence, and a major form of 190 kDa derived from the full-length form by post-translational proteolysis close to Phe-1690. Post-translationally, phosphorylated. Phosphorylation by PKA activates the calcium channel. Both the minor and major forms are phosphorylated in vitro by PKA. Phosphorylation at Ser-1575 is involved in beta-adrenergic-mediated regulation of the channel.

The protein resides in the cell membrane. It is found in the sarcolemma. It localises to the T-tubule. The enzyme catalyses Ca(2+)(in) = Ca(2+)(out). Its activity is regulated as follows. Channel activity is blocked by dihydropyridines (DHP), phenylalkylamines, and by benzothiazepines. In terms of biological role, pore-forming, alpha-1S subunit of the voltage-gated calcium channel that gives rise to L-type calcium currents in skeletal muscle. Calcium channels containing the alpha-1S subunit play an important role in excitation-contraction coupling in skeletal muscle via their interaction with RYR1, which triggers Ca(2+) release from the sarcplasmic reticulum and ultimately results in muscle contraction. Long-lasting (L-type) calcium channels belong to the 'high-voltage activated' (HVA) group. This Mus musculus (Mouse) protein is Voltage-dependent L-type calcium channel subunit alpha-1S (Cacna1s).